The sequence spans 98 residues: Mobilization protein MobS (98 aa).

Functionally, this protein is essential to promote the specific transfer of the plasmid in the presence of conjugative plasmids. The polypeptide is Mobilization protein MobS (mobS) (Acidithiobacillus ferridurans).